The chain runs to 31 residues: Cytochrome b6-f complex subunit 6 (31 aa).

A helical membrane pass occupies residues 4-26; sequence IVSYFGFLLTASTITPALFIGLS.

The protein belongs to the PetL family. The 4 large subunits of the cytochrome b6-f complex are cytochrome b6, subunit IV (17 kDa polypeptide, PetD), cytochrome f and the Rieske protein, while the 4 small subunits are PetG, PetL, PetM and PetN. The complex functions as a dimer.

Its subcellular location is the plastid. The protein resides in the chloroplast thylakoid membrane. Functionally, component of the cytochrome b6-f complex, which mediates electron transfer between photosystem II (PSII) and photosystem I (PSI), cyclic electron flow around PSI, and state transitions. PetL is important for photoautotrophic growth as well as for electron transfer efficiency and stability of the cytochrome b6-f complex. The chain is Cytochrome b6-f complex subunit 6 from Nymphaea alba (White water-lily).